A 199-amino-acid chain; its full sequence is Probable chemoreceptor glutamine deamidase CheD (199 aa).

This sequence belongs to the CheD family.

It carries out the reaction L-glutaminyl-[protein] + H2O = L-glutamyl-[protein] + NH4(+). In terms of biological role, probably deamidates glutamine residues to glutamate on methyl-accepting chemotaxis receptors (MCPs), playing an important role in chemotaxis. This Nitratidesulfovibrio vulgaris (strain ATCC 29579 / DSM 644 / CCUG 34227 / NCIMB 8303 / VKM B-1760 / Hildenborough) (Desulfovibrio vulgaris) protein is Probable chemoreceptor glutamine deamidase CheD.